The chain runs to 401 residues: MRLKHLPSEFQEALPVLEKIKAAGFEAYFVGGSVRDVLLGHPIHDVDIASSSYPEETKKIFPRTVDIGIEHGTVLVLENGHDYEVTTFRTEDLYVDYRRPSQVSFVRSLEEDLKRRDFTINAFALDEKANIIDKFNGLVDLEQKILRAVGNAAERFNEDALRIMRGLRFAAQLNFDIEKKTFIAMREHAPLLEKISVERSFIEFDKLLRAPYWRKGINCLIASQAYDYLPLLQSTADKWQQLLTDLPEDFTFSTSEQAWAAVLLYLNVENPRSFLKSWKTSNDFQKTVEKLLAIYRLREDRQIKKTDVYQYSATLLTLVEELRQAQGLAVDFEHIKELDEALTIHDKHEIVVKGGDLMAAFDLKPGPDLGKILNQIESFIVAGNLANERQAILDFVRKEID.

The ATP site is built by glycine 32 and arginine 35. CTP is bound by residues glycine 32 and arginine 35. Mg(2+) is bound by residues aspartate 45 and aspartate 47. Residues arginine 116, aspartate 159, arginine 162, arginine 165, and arginine 168 each coordinate ATP. Residues arginine 116, aspartate 159, arginine 162, arginine 165, and arginine 168 each coordinate CTP.

Belongs to the tRNA nucleotidyltransferase/poly(A) polymerase family. Bacterial CCA-adding enzyme type 3 subfamily. Homodimer. Mg(2+) is required as a cofactor.

The enzyme catalyses a tRNA precursor + 2 CTP + ATP = a tRNA with a 3' CCA end + 3 diphosphate. It carries out the reaction a tRNA with a 3' CCA end + 2 CTP + ATP = a tRNA with a 3' CCACCA end + 3 diphosphate. Functionally, catalyzes the addition and repair of the essential 3'-terminal CCA sequence in tRNAs without using a nucleic acid template. Adds these three nucleotides in the order of C, C, and A to the tRNA nucleotide-73, using CTP and ATP as substrates and producing inorganic pyrophosphate. tRNA 3'-terminal CCA addition is required both for tRNA processing and repair. Also involved in tRNA surveillance by mediating tandem CCA addition to generate a CCACCA at the 3' terminus of unstable tRNAs. While stable tRNAs receive only 3'-terminal CCA, unstable tRNAs are marked with CCACCA and rapidly degraded. This is CCA-adding enzyme from Streptococcus mutans serotype c (strain ATCC 700610 / UA159).